Here is a 114-residue protein sequence, read N- to C-terminus: Lectin MVL (114 aa).

The stretch at 2–55 (ASYKVNIPAGPLWSNAEAQQVGPKIAAAHQGNFTGQWTTVVESAMSVVEVELQV) is repeat 1. A carbohydrate is bound by residues 12–16 (PLWSN), Gln-20, and 36–44 (GQWTTVVES). A linker region spans residues 56 to 60 (ENTGI). Repeat 2 spans residues 61–114 (HEFKTDVLAGPLWSNDEAQKLGPQIAASYGAEFTGQWRTIVEGVMSVIQIKYTF). A carbohydrate-binding positions include 71–75 (PLWSN), Gln-79, and 95–103 (GQWRTIVEG).

As to quaternary structure, homodimer.

It is found in the cytoplasm. Its function is as follows. Carbohydrate-binding protein that binds oligomannosides such as Man(6)GlcNAc(2) with sub-micromolar affinities. The specificity of MVL is unique in that its minimal target comprises the Man-alpha-(1-&gt;6)-Man-beta-(1-&gt;4)-GlcNAc-beta-(1-&gt;4)-GlcNAc tetrasaccharide core (Man(2)A) found in N-linked oligomannosides. Displays hemagglutininating activity on rabbit, horse and hen erythrocytes. This activity is inhibited by yeast mannan. Does not bind mono- and disaccharides. Inhibits HIV-1 envelope-mediated cell fusion at nanomolar concentrations through carbohydrate-mediated interactions with high-mannose residues on the surface of the HIV envelope glycoprotein gp120. Functionally, unexpectedly for a lectin, one of the 2 oligomannose binding sites of MVL can catalyze the cleavage of chitin fragments (such as chitotriose, i.e. GlcNAc(3) or GlcNAc-beta-(1-&gt;4)-GlcNAcbeta-(1-&gt;4)-GlcNAc, and chitotetraose, i.e. GlcNAc(4)) to GlcNAc. This weak beta-1,4-glycosidase activity is restricted to the C-terminal carbohydrate-binding site. Does not cleave Man(3)GlcNAc(2) or the tetrasaccharide Man(2)A. This chain is Lectin MVL (mvl), found in Microcystis viridis (Polycystis viridis).